The following is an 843-amino-acid chain: Excretory canal abnormal protein 6 (843 aa).

Disordered regions lie at residues 54 to 135, 568 to 601, 748 to 767, and 773 to 843; these read QLKD…EKKT, TLES…PAKT, TPLS…MTAE, and TMKP…PKWV. 2 stretches are compositionally biased toward pro residues: residues 66–76 and 83–103; these read TPPPPPPPPPL and APPP…PPPI. The FH2 domain maps to 127–512; the sequence is FLPKKEKKTK…KEEKKETQTT (386 aa). 2 stretches are compositionally biased toward polar residues: residues 776-792 and 819-830; these read PSVS…TSSH and IPQSPTVTSSAR.

This sequence belongs to the formin homology family. Expressed in the excretory cell and mostly accumulates at the tip of the excretory cell canals.

It localises to the cytoplasm. It is found in the cytoskeleton. In terms of biological role, constitutively active protein required for microtubule and F-actin growth, structural maintenance and organization during excretory cell tubulogenesis. The polypeptide is Excretory canal abnormal protein 6 (Caenorhabditis elegans).